A 482-amino-acid polypeptide reads, in one-letter code: Proline--tRNA ligase (482 aa).

This sequence belongs to the class-II aminoacyl-tRNA synthetase family. ProS type 3 subfamily. In terms of assembly, homodimer.

Its subcellular location is the cytoplasm. The enzyme catalyses tRNA(Pro) + L-proline + ATP = L-prolyl-tRNA(Pro) + AMP + diphosphate. Its function is as follows. Catalyzes the attachment of proline to tRNA(Pro) in a two-step reaction: proline is first activated by ATP to form Pro-AMP and then transferred to the acceptor end of tRNA(Pro). The chain is Proline--tRNA ligase from Natronomonas pharaonis (strain ATCC 35678 / DSM 2160 / CIP 103997 / JCM 8858 / NBRC 14720 / NCIMB 2260 / Gabara) (Halobacterium pharaonis).